The sequence spans 98 residues: Homeobox protein Ht-En (98 aa).

Positions 3 to 62 (EKRPRTAFTGDQLARLKREFSENKYLTEQRRTCLAKELNLNESQIKIWFQNKRAKMKKAS) form a DNA-binding region, homeobox. The disordered stretch occupies residues 79–98 (NHSSSSSSSSSSSSSIFLLA). Over residues 81–98 (SSSSSSSSSSSSSIFLLA) the composition is skewed to low complexity.

This sequence belongs to the engrailed homeobox family. In terms of processing, phosphorylated in the Ser-rich domain.

The protein resides in the nucleus. Functionally, this protein specifies the body segmentation pattern. The polypeptide is Homeobox protein Ht-En (HT-EN) (Helobdella triserialis (Leech)).